The primary structure comprises 349 residues: Alanine racemase (349 aa).

Lys35 acts as the Proton acceptor; specific for D-alanine in catalysis. Lys35 is subject to N6-(pyridoxal phosphate)lysine. Position 130 (Arg130) interacts with substrate. Tyr244 acts as the Proton acceptor; specific for L-alanine in catalysis. Met292 contacts substrate.

Belongs to the alanine racemase family. It depends on pyridoxal 5'-phosphate as a cofactor.

It catalyses the reaction L-alanine = D-alanine. The protein operates within amino-acid biosynthesis; D-alanine biosynthesis; D-alanine from L-alanine: step 1/1. Catalyzes the interconversion of L-alanine and D-alanine. May also act on other amino acids. This Cereibacter sphaeroides (strain KD131 / KCTC 12085) (Rhodobacter sphaeroides) protein is Alanine racemase (alr).